The chain runs to 445 residues: tRNA-2-methylthio-N(6)-dimethylallyladenosine synthase (445 aa).

In terms of domain architecture, MTTase N-terminal spans 4–121 (NKIYIKTWGC…LPNMIQEVKK (118 aa)). [4Fe-4S] cluster contacts are provided by cysteine 13, cysteine 50, cysteine 84, cysteine 158, cysteine 162, and cysteine 165. One can recognise a Radical SAM core domain in the interval 144 to 376 (RKPKVTAFVS…QTLIRNNTTM (233 aa)). One can recognise a TRAM domain in the interval 379–442 (QKMLGSIQSV…PNSLRGSYEK (64 aa)).

The protein belongs to the methylthiotransferase family. MiaB subfamily. In terms of assembly, monomer. Requires [4Fe-4S] cluster as cofactor.

Its subcellular location is the cytoplasm. It carries out the reaction N(6)-dimethylallyladenosine(37) in tRNA + (sulfur carrier)-SH + AH2 + 2 S-adenosyl-L-methionine = 2-methylsulfanyl-N(6)-dimethylallyladenosine(37) in tRNA + (sulfur carrier)-H + 5'-deoxyadenosine + L-methionine + A + S-adenosyl-L-homocysteine + 2 H(+). Its function is as follows. Catalyzes the methylthiolation of N6-(dimethylallyl)adenosine (i(6)A), leading to the formation of 2-methylthio-N6-(dimethylallyl)adenosine (ms(2)i(6)A) at position 37 in tRNAs that read codons beginning with uridine. The protein is tRNA-2-methylthio-N(6)-dimethylallyladenosine synthase of Buchnera aphidicola subsp. Baizongia pistaciae (strain Bp).